A 151-amino-acid chain; its full sequence is Transcriptional repressor NrdR (151 aa).

The segment at 3 to 34 (CPYCAYGESKVVDSRSTEDGSSIRRRRECLKC) is a zinc-finger region. The region spanning 49–139 (ILVIKKNMSR…VYRQFKDINT (91 aa)) is the ATP-cone domain.

This sequence belongs to the NrdR family. Zn(2+) serves as cofactor.

In terms of biological role, negatively regulates transcription of bacterial ribonucleotide reductase nrd genes and operons by binding to NrdR-boxes. In Clostridium botulinum (strain ATCC 19397 / Type A), this protein is Transcriptional repressor NrdR.